The following is a 617-amino-acid chain: Proline--tRNA ligase (617 aa).

The protein belongs to the class-II aminoacyl-tRNA synthetase family. ProS type 1 subfamily. Homodimer.

The protein localises to the cytoplasm. It catalyses the reaction tRNA(Pro) + L-proline + ATP = L-prolyl-tRNA(Pro) + AMP + diphosphate. Its function is as follows. Catalyzes the attachment of proline to tRNA(Pro) in a two-step reaction: proline is first activated by ATP to form Pro-AMP and then transferred to the acceptor end of tRNA(Pro). As ProRS can inadvertently accommodate and process non-cognate amino acids such as alanine and cysteine, to avoid such errors it has two additional distinct editing activities against alanine. One activity is designated as 'pretransfer' editing and involves the tRNA(Pro)-independent hydrolysis of activated Ala-AMP. The other activity is designated 'posttransfer' editing and involves deacylation of mischarged Ala-tRNA(Pro). The misacylated Cys-tRNA(Pro) is not edited by ProRS. The chain is Proline--tRNA ligase from Streptococcus agalactiae serotype Ia (strain ATCC 27591 / A909 / CDC SS700).